The sequence spans 141 residues: Hemoglobin subunit alpha (141 aa).

Residues 1-141 (VLSSADKANI…VSTVLTSKYR (141 aa)) enclose the Globin domain. S3 bears the Phosphoserine mark. N6-succinyllysine is present on residues K7 and K11. At K16 the chain carries N6-acetyllysine; alternate. Residue K16 is modified to N6-succinyllysine; alternate. A Phosphotyrosine modification is found at Y24. The residue at position 40 (K40) is an N6-succinyllysine. S49 carries the phosphoserine modification. H58 contributes to the O2 binding site. H87 is a heme b binding site. Residue S102 is modified to Phosphoserine. At T108 the chain carries Phosphothreonine. S131 bears the Phosphoserine mark. Residues T134 and T137 each carry the phosphothreonine modification. The residue at position 138 (S138) is a Phosphoserine.

Belongs to the globin family. In terms of assembly, heterotetramer of two alpha chains and two beta chains. Red blood cells.

Functionally, involved in oxygen transport from the lung to the various peripheral tissues. In terms of biological role, hemopressin acts as an antagonist peptide of the cannabinoid receptor CNR1. Hemopressin-binding efficiently blocks cannabinoid receptor CNR1 and subsequent signaling. The sequence is that of Hemoglobin subunit alpha (HBA) from Crocuta crocuta (Spotted hyena).